The primary structure comprises 147 residues: GLCPDKYKRYSLQHSFCLPTCVSCAFYSKDVRYWLKNYILYQHNNLRNVVASGRSYGVDHVPRICLTVVTRIGCGYLFRKYTNVICNYGPRGNVEGEEIYKGGDICSACPANTCCGDGCKYHGLCKFGEPNLPEIFYCGFNGESDCR.

Belongs to the CRISP family. In terms of tissue distribution, expressed by the venom gland.

Its subcellular location is the secreted. This Phoneutria keyserlingi (Brazilian wandering spider) protein is CRISP-1.